Here is a 343-residue protein sequence, read N- to C-terminus: Type II restriction enzyme BsuMI component YdiS (343 aa).

As to quaternary structure, bsuMI restriction activity requires YdiR, YdiS and YdjA.

The enzyme catalyses Endonucleolytic cleavage of DNA to give specific double-stranded fragments with terminal 5'-phosphates.. Functionally, a P subtype restriction enzyme that recognizes the double-stranded sequence 5'-CTCGAG-3'; the cleavage site is unknown. This Bacillus subtilis (strain 168) protein is Type II restriction enzyme BsuMI component YdiS (ydiS).